The primary structure comprises 1020 residues: Retinoblastoma-related protein (1020 aa).

2 stretches are compositionally biased toward polar residues: residues 382–391 and 398–409; these read SPTKTITSPL and ASHTNGILGSTN. The interval 382–409 is disordered; sequence SPTKTITSPLSPHRSPASHTNGILGSTN. Residues 415–616 form a domain A region; the sequence is TPVSTAMTTA…EKGSSMYNSL (202 aa). A pocket region spans residues 415–869; it reads TPVSTAMTTA…NEIFIPAAKP (455 aa). The interval 617 to 737 is spacer; the sequence is TVARPSLSAE…PGGGGETCAE (121 aa). Positions 738–869 are domain B; that stretch reads TGINIFFSKI…NEIFIPAAKP (132 aa).

This sequence belongs to the retinoblastoma protein (RB) family.

It localises to the nucleus. Its function is as follows. Regulator of biological processes that recruits a histone deacetylase to control gene transcription. May play a role in the entry into mitosis, negatively regulating the cell proliferation. Formation of stable complexes with geminiviridae replication-associated proteins may create a cellular environment which favors viral DNA replication. This is Retinoblastoma-related protein (RBR) from Ricinus communis (Castor bean).